Reading from the N-terminus, the 200-residue chain is Segregation and condensation protein B (200 aa).

It belongs to the ScpB family. Homodimer. Homodimerization may be required to stabilize the binding of ScpA to the Smc head domains. Component of a cohesin-like complex composed of ScpA, ScpB and the Smc homodimer, in which ScpA and ScpB bind to the head domain of Smc. The presence of the three proteins is required for the association of the complex with DNA.

It localises to the cytoplasm. Functionally, participates in chromosomal partition during cell division. May act via the formation of a condensin-like complex containing Smc and ScpA that pull DNA away from mid-cell into both cell halves. The protein is Segregation and condensation protein B of Lactobacillus delbrueckii subsp. bulgaricus (strain ATCC 11842 / DSM 20081 / BCRC 10696 / JCM 1002 / NBRC 13953 / NCIMB 11778 / NCTC 12712 / WDCM 00102 / Lb 14).